A 714-amino-acid chain; its full sequence is Angiogenic factor with G patch and FHA domains 1 (714 aa).

Residues 1 to 18 (MASEAPSPPRSPPPPTSP) show a composition bias toward pro residues. 3 disordered regions span residues 1–22 (MASEAPSPPRSPPPPTSPEPEL), 259–307 (QPYP…HTSC), and 322–384 (IGIH…SYDE). At Ala-2 the chain carries N-acetylalanine. Residues Ser-7 and Ser-11 each carry the phosphoserine modification. Residues 18–88 (PEPELAQLRR…QRGRNEDNKK (71 aa)) are a coiled coil. Residues 279-298 (KDPDSSATNEEKDLNSEDQK) show a composition bias toward basic and acidic residues. Positions 335-355 (VPTSGNTIESPLHENISNSTS) are enriched in polar residues. Ser-344 carries the phosphoserine modification. Residues 364 to 383 (TDSEPEEGEITDSQTEDSYD) show a composition bias toward acidic residues. Residues 434-487 (ATIGREKDMEHTLRIPEVGVSKFHAEIYFDHDLQSYVLVDQGSQNGTIVNGKQI) enclose the FHA domain. Residues 586 to 609 (KYKDRAGKRREQVGSEGTFQRDDA) are compositionally biased toward basic and acidic residues. Disordered regions lie at residues 586 to 617 (KYKDRAGKRREQVGSEGTFQRDDAPASVHSEI) and 655 to 714 (RTHA…GTLE). One can recognise a G-patch domain in the interval 619 to 665 (DSNKGRKMLEKMGWKKGEGLGKDGGGMKTPIQLQLRRTHAGLGTGKP). The residue at position 664 (Lys-664) is an N6-acetyllysine. The segment covering 680 to 690 (KNWDKARERFT) has biased composition (basic and acidic residues).

Interacts with the secreted angiogenic factor TNFSF12. In terms of tissue distribution, widely expressed. Expressed in endothelial cells, vascular smooth muscle cells and osteoblasts. Expressed in umbilical vein endothelial cells and microvascular endothelial cells.

It localises to the cytoplasm. The protein localises to the secreted. Its function is as follows. Promotes angiogenesis and the proliferation of endothelial cells. Able to bind to endothelial cells and promote cell proliferation, suggesting that it may act in an autocrine fashion. The sequence is that of Angiogenic factor with G patch and FHA domains 1 (AGGF1) from Homo sapiens (Human).